Here is a 297-residue protein sequence, read N- to C-terminus: Counting factor 45-1 (297 aa).

Residues 1–20 (MNKLISLLLVCLVAIALVNA) form the signal peptide. The Ch-type lysozyme domain occupies 24–235 (IDFDSDTVNS…SASTGSGSGS (212 aa)). Active-site residues include D29, D119, and E121. The N-linked (GlcNAc...) asparagine glycan is linked to N166. Residues 231 to 296 (SGSGSSSGSS…GSSSGSGSGS (66 aa)) are S-G-S motif repeats. The disordered stretch occupies residues 231–297 (SGSGSSSGSS…SSSGSGSGSS (67 aa)). A compositionally biased stretch (low complexity) spans 234 to 275 (GSSSGSSSGSSSGSSSGSGSSSGSGSSSGSSSGSGSGSSSSG). Positions 276–297 (SGSGSGSSSGSGSSSGSGSGSS) are enriched in gly residues.

It belongs to the glycosyl hydrolase 25 family. In terms of assembly, monomer. Component of the counting factor (CF) complex, which includes cf60, cf50, cf45-1 and ctnA.

It localises to the secreted. Cell-counting factor that limits the maximum size of the multicellular structure during aggregation. The protein is Counting factor 45-1 (cf45-1) of Dictyostelium discoideum (Social amoeba).